Consider the following 221-residue polypeptide: DNA replication complex GINS protein SLD5 (221 aa).

The protein belongs to the GINS4/SLD5 family. As to quaternary structure, component of the GINS complex which is a heterotetramer of gins1/psf1, gins2/psf2, gins3/psf3 and gins4/sld5. Component of the CMG helicase complex, composed of the mcm2-7 complex, the GINS complex and cdc45.

The protein resides in the nucleus. It is found in the chromosome. The protein localises to the cytoplasm. Required for initiation of chromosomal DNA replication. Core component of CDC45-MCM-GINS (CMG) helicase, the molecular machine that unwinds template DNA during replication, and around which the replisome is built. This Xenopus laevis (African clawed frog) protein is DNA replication complex GINS protein SLD5.